The chain runs to 399 residues: Argonaute-binding protein 1 (399 aa).

Component of the argonaute siRNA chaperone (ARC) complex composed of ago1, arb1 and arb2. Interacts with ago1.

It is found in the nucleus. The protein resides in the cytoplasm. Functionally, component of the argonaute siRNA chaperone (ARC) complex which is required for histone H3K9 methylation, heterochromatin assembly and siRNA generation. The ARC complex contains mostly double-stranded siRNA. Inhibits the release of the siRNA passenger strand from ago1 together with arb2. Inhibits the slicer activity of ago1. Required for swi6 localization to the centromeric repeats. This chain is Argonaute-binding protein 1 (arb1), found in Schizosaccharomyces pombe (strain 972 / ATCC 24843) (Fission yeast).